We begin with the raw amino-acid sequence, 228 residues long: Demethylmenaquinone methyltransferase (228 aa).

Residues Thr62, Asp80, 100 to 101, and Ser117 each bind S-adenosyl-L-methionine; that span reads DA.

It belongs to the class I-like SAM-binding methyltransferase superfamily. MenG/UbiE family.

The enzyme catalyses a 2-demethylmenaquinol + S-adenosyl-L-methionine = a menaquinol + S-adenosyl-L-homocysteine + H(+). It functions in the pathway quinol/quinone metabolism; menaquinone biosynthesis; menaquinol from 1,4-dihydroxy-2-naphthoate: step 2/2. Methyltransferase required for the conversion of demethylmenaquinol (DMKH2) to menaquinol (MKH2). This chain is Demethylmenaquinone methyltransferase, found in Mycolicibacterium vanbaalenii (strain DSM 7251 / JCM 13017 / BCRC 16820 / KCTC 9966 / NRRL B-24157 / PYR-1) (Mycobacterium vanbaalenii).